The primary structure comprises 307 residues: Ribonuclease Z (307 aa).

Residues H63, H65, D67, H68, H143, D213, and H271 each coordinate Zn(2+). The Proton acceptor role is filled by D67.

Belongs to the RNase Z family. As to quaternary structure, homodimer. It depends on Zn(2+) as a cofactor.

It catalyses the reaction Endonucleolytic cleavage of RNA, removing extra 3' nucleotides from tRNA precursor, generating 3' termini of tRNAs. A 3'-hydroxy group is left at the tRNA terminus and a 5'-phosphoryl group is left at the trailer molecule.. In terms of biological role, zinc phosphodiesterase, which displays some tRNA 3'-processing endonuclease activity. Probably involved in tRNA maturation, by removing a 3'-trailer from precursor tRNA. The polypeptide is Ribonuclease Z (Lactococcus lactis subsp. cremoris (strain SK11)).